The chain runs to 252 residues: MMLHAQHMPGQPGTPSLVFLHGFSGDCREWQPVGEQFHGCSRLYIDLPGHGGSAAIPVGGFADVIRLLRATLISYNILKFWLVGYSLGGRVAMMAACQGIPGLCGLVVEGGHPGLQNEQARAERRLSDGRWAERFRHEPLTEVFHDWYQQPVFASLTAQQRQALTALRSQNNGETLAAMLEATSLAAQPDLREALNALAFPFYYLCGERDSKFRALAQEVAATCHVIRNAGHNAHRENPAGVVDSLAQILRL.

The protein belongs to the AB hydrolase superfamily. MenH family. As to quaternary structure, monomer.

It catalyses the reaction 5-enolpyruvoyl-6-hydroxy-2-succinyl-cyclohex-3-ene-1-carboxylate = (1R,6R)-6-hydroxy-2-succinyl-cyclohexa-2,4-diene-1-carboxylate + pyruvate. It functions in the pathway quinol/quinone metabolism; 1,4-dihydroxy-2-naphthoate biosynthesis; 1,4-dihydroxy-2-naphthoate from chorismate: step 3/7. The protein operates within quinol/quinone metabolism; menaquinone biosynthesis. In terms of biological role, catalyzes a proton abstraction reaction that results in 2,5-elimination of pyruvate from 2-succinyl-5-enolpyruvyl-6-hydroxy-3-cyclohexene-1-carboxylate (SEPHCHC) and the formation of 2-succinyl-6-hydroxy-2,4-cyclohexadiene-1-carboxylate (SHCHC). This chain is 2-succinyl-6-hydroxy-2,4-cyclohexadiene-1-carboxylate synthase, found in Salmonella newport (strain SL254).